The following is a 44-amino-acid chain: DNA-directed RNA polymerase subunit Rpo12 (44 aa).

The Zn(2+) site is built by Cys-8, Cys-22, and Cys-25.

Belongs to the archaeal Rpo12/eukaryotic RPC10 RNA polymerase subunit family. In terms of assembly, part of the RNA polymerase complex. The cofactor is Zn(2+).

The protein localises to the cytoplasm. It carries out the reaction RNA(n) + a ribonucleoside 5'-triphosphate = RNA(n+1) + diphosphate. DNA-dependent RNA polymerase (RNAP) catalyzes the transcription of DNA into RNA using the four ribonucleoside triphosphates as substrates. In Haloquadratum walsbyi (strain DSM 16790 / HBSQ001), this protein is DNA-directed RNA polymerase subunit Rpo12.